Here is a 358-residue protein sequence, read N- to C-terminus: Pituitary-specific positive transcription factor 1 (358 aa).

Positions 5 to 12 (AFSADSFT) match the 9aaTAD motif. The interval 164 to 195 (PAVLSEEPPLGGTKDLRLRSRPPDDPPDMDSP) is disordered. Basic and acidic residues predominate over residues 177 to 187 (KDLRLRSRPPD). Residues 192-266 (MDSPQIRELE…ILAKWLDEAE (75 aa)) enclose the POU-specific domain. A DNA-binding region (homeobox) is located at residues 282–341 (KRKRRTTISLGAKEALERSFGEKIKPSSQEIVRMAEGLHLEKEVVRVWFCNRRQREKRVK).

The protein belongs to the POU transcription factor family. Class-1 subfamily.

It is found in the nucleus. Transcription factor that activates growth hormone and prolactin genes. Specifically binds to the consensus sequence 5'-TAAAT-3'. The protein is Pituitary-specific positive transcription factor 1 (pou1f1) of Oncorhynchus mykiss (Rainbow trout).